Here is a 298-residue protein sequence, read N- to C-terminus: tRNA U34 carboxymethyltransferase (298 aa).

Carboxy-S-adenosyl-L-methionine-binding positions include Lys-69, Trp-83, Lys-88, Gly-107, 129 to 131 (DPS), 156 to 157 (VE), Tyr-176, and Arg-291.

It belongs to the class I-like SAM-binding methyltransferase superfamily. CmoB family. In terms of assembly, homotetramer.

The enzyme catalyses carboxy-S-adenosyl-L-methionine + 5-hydroxyuridine(34) in tRNA = 5-carboxymethoxyuridine(34) in tRNA + S-adenosyl-L-homocysteine + H(+). In terms of biological role, catalyzes carboxymethyl transfer from carboxy-S-adenosyl-L-methionine (Cx-SAM) to 5-hydroxyuridine (ho5U) to form 5-carboxymethoxyuridine (cmo5U) at position 34 in tRNAs. The sequence is that of tRNA U34 carboxymethyltransferase from Campylobacter curvus (strain 525.92).